The sequence spans 307 residues: uncharacterized protein (307 aa).

This is an uncharacterized protein from Sinorhizobium fredii (strain NBRC 101917 / NGR234).